Consider the following 808-residue polypeptide: Zinc finger protein 841 (808 aa).

Residue Lys137 forms a Glycyl lysine isopeptide (Lys-Gly) (interchain with G-Cter in SUMO2) linkage. A C2H2-type 1; degenerate zinc finger spans residues 145-167; the sequence is YIGNECGKAFRVSSSLINHQMIH. The C2H2-type 2; degenerate zinc finger occupies 173 to 195; it reads YRCNESGKAFHRGSLLTVHQIVH. 13 consecutive C2H2-type zinc fingers follow at residues 201 to 223, 229 to 251, 257 to 279, 285 to 307, 313 to 335, 341 to 363, 369 to 391, 397 to 419, 425 to 447, 453 to 475, 481 to 503, 509 to 531, and 537 to 559; these read YQCD…RRSH, YICN…QRIH, YKCN…QTVH, YKCN…HIIH, YTCD…QIIH, YKCN…RRIH, YKCN…QRVH, YKCN…QRIH, YKCN…MRCH, LHCN…QRMH, YKCN…RRSH, FQCN…RKIH, and YKCN…LVIH. Glycyl lysine isopeptide (Lys-Gly) (interchain with G-Cter in SUMO2) cross-links involve residues Lys554 and Lys579. The C2H2-type 16; degenerate zinc-finger motif lies at 565 to 587; that stretch reads YHCNEFGEAFIQSSKLARYHRNP. C2H2-type zinc fingers lie at residues 593–615, 621–643, 649–671, 677–699, 705–727, 733–755, and 761–783; these read HKCS…QRRH, YKCI…RRIH, YKCN…WSIH, YKCN…QMMH, YKCN…QRNH, YKCM…QRIH, and YKCN…QIKH. A Glycyl lysine isopeptide (Lys-Gly) (interchain with G-Cter in SUMO2) cross-link involves residue Lys791.

The protein belongs to the krueppel C2H2-type zinc-finger protein family.

The protein localises to the nucleus. Its function is as follows. May be involved in transcriptional regulation. The polypeptide is Zinc finger protein 841 (ZNF841) (Homo sapiens (Human)).